The primary structure comprises 192 residues: Archaemetzincin (192 aa).

H137 lines the Zn(2+) pocket. The active-site Proton acceptor is E138. Zn(2+) contacts are provided by H141, H147, C148, C153, C172, and C175.

The protein belongs to the peptidase M54 family. As to quaternary structure, monomer. Zn(2+) serves as cofactor.

Its function is as follows. Probable zinc metalloprotease whose natural substrate is unknown. In Pyrococcus furiosus (strain ATCC 43587 / DSM 3638 / JCM 8422 / Vc1), this protein is Archaemetzincin.